Consider the following 192-residue polypeptide: Interleukin-18 (192 aa).

Residues 1 to 35 constitute a propeptide that is removed on maturation; the sequence is MAAEPVEDNCISFVEMKFINNTLYFVAENGDLESD.

Belongs to the IL-1 family. In terms of assembly, forms a ternary complex with ligand-binding receptor subunit IL18R1 and signaling receptor subunit IL18RAP at the plasma membrane. Mature IL18 first binds to IL18R1 forming a low affinity binary complex, which then interacts with IL18RAP to form a high affinity ternary complex that signals inside the cell. Interacts with cargo receptor TMED10; the interaction mediates the translocation from the cytoplasm into the ERGIC (endoplasmic reticulum-Golgi intermediate compartment) and thereby secretion. The pro-IL-18 precursor is processed by CASP1, CASP4 or CASP5 to yield its mature, active form. The pro-IL-18 precursor features autoinhibitory interactions between the propeptide and the post-cleavage-site region, preventing recognition by the IL18R1 receptor. Processing by CASP1, CASP4 or CASP5 induces conformational changes to generate critical receptor-binding sites. The mature form is then secreted and released in the extracellular milieu by passing through the gasdermin-D (GSDMD) pore. In contrast, cleavage by CASP3 inactivates IL18.

The protein localises to the cytoplasm. Its subcellular location is the cytosol. The protein resides in the secreted. Functionally, pro-inflammatory cytokine primarily involved in epithelial barrier repair, polarized T-helper 1 (Th1) cell and natural killer (NK) cell immune responses. Upon binding to IL18R1 and IL18RAP, forms a signaling ternary complex which activates NF-kappa-B, triggering synthesis of inflammatory mediators. Synergizes with IL12/interleukin-12 to induce IFNG synthesis from T-helper 1 (Th1) cells and natural killer (NK) cells. Involved in transduction of inflammation downstream of pyroptosis: its mature form is specifically released in the extracellular milieu by passing through the gasdermin-D (GSDMD) pore. This Capra hircus (Goat) protein is Interleukin-18 (IL18).